The chain runs to 175 residues: Vesicle-associated membrane protein-associated protein SCS22 (175 aa).

The MSP domain occupies 1 to 125 (MRIVPEKLVF…DDIVFKKIKI (125 aa)). At 1 to 154 (MRIVPEKLVF…RAPSAGNGQS (154 aa)) the chain is on the cytoplasmic side. The segment at 133–152 (RKPSGNHDAESARAPSAGNG) is disordered. The helical; Anchor for type IV membrane protein transmembrane segment at 155–175 (LSSRALLIITVIALLVGWIYY) threads the bilayer.

The protein belongs to the VAMP-associated protein (VAP) (TC 9.B.17) family.

It is found in the membrane. Its function is as follows. Targets proteins containing a FFAT motif to membranes. Involved in regulation of phospholipid metabolism. The sequence is that of Vesicle-associated membrane protein-associated protein SCS22 (SCS22) from Saccharomyces cerevisiae (strain ATCC 204508 / S288c) (Baker's yeast).